The following is a 170-amino-acid chain: Phosphopantetheine adenylyltransferase (170 aa).

Thr-9 serves as a coordination point for substrate. ATP-binding positions include 9 to 10 and His-17; that span reads TF. Substrate contacts are provided by Lys-41, Leu-73, and Arg-87. ATP-binding positions include 88-90, Glu-98, and 123-129; these read GLR and YQFISGT.

This sequence belongs to the bacterial CoaD family. Homohexamer. It depends on Mg(2+) as a cofactor.

Its subcellular location is the cytoplasm. It carries out the reaction (R)-4'-phosphopantetheine + ATP + H(+) = 3'-dephospho-CoA + diphosphate. The protein operates within cofactor biosynthesis; coenzyme A biosynthesis; CoA from (R)-pantothenate: step 4/5. Functionally, reversibly transfers an adenylyl group from ATP to 4'-phosphopantetheine, yielding dephospho-CoA (dPCoA) and pyrophosphate. The polypeptide is Phosphopantetheine adenylyltransferase (Bordetella petrii (strain ATCC BAA-461 / DSM 12804 / CCUG 43448)).